The sequence spans 273 residues: NAD-dependent protein deacylase (273 aa).

A Deacetylase sirtuin-type domain is found at 20 to 272 (RERLRQRIFF…PEFVEKLLKG (253 aa)). 48-67 (GAGISAESGIRTFRAADGLW) contributes to the NAD(+) binding site. The substrate site is built by Tyr92 and Arg95. 129 to 132 (QNID) serves as a coordination point for NAD(+). The active-site Proton acceptor is the His147. Cys155 and Cys174 together coordinate Zn(2+). NAD(+) is bound by residues 214–216 (GTS), 240–242 (NLE), and Ala258.

The protein belongs to the sirtuin family. Class III subfamily. Zn(2+) is required as a cofactor.

The protein resides in the cytoplasm. The catalysed reaction is N(6)-acetyl-L-lysyl-[protein] + NAD(+) + H2O = 2''-O-acetyl-ADP-D-ribose + nicotinamide + L-lysyl-[protein]. It catalyses the reaction N(6)-succinyl-L-lysyl-[protein] + NAD(+) + H2O = 2''-O-succinyl-ADP-D-ribose + nicotinamide + L-lysyl-[protein]. It carries out the reaction N(6)-(2-hydroxyisobutanoyl)-L-lysyl-[protein] + NAD(+) + H2O = 2''-O-(2-hydroxyisobutanoyl)-ADP-D-ribose + nicotinamide + L-lysyl-[protein]. Its function is as follows. NAD-dependent lysine deacetylase that specifically removes acetyl groups on target proteins. Also acts as a protein-lysine deacylase by mediating protein desuccinylation and de-2-hydroxyisobutyrylation. Modulates the activities of several proteins which are inactive in their acylated form. The protein is NAD-dependent protein deacylase of Escherichia coli O157:H7.